Consider the following 735-residue polypeptide: Protein RETICULATA-RELATED 5, chloroplastic (735 aa).

Residues 1 to 75 (MKPTTNGGLL…TRRAILVAPP (75 aa)) constitute a chloroplast transit peptide. The next 2 helical transmembrane spans lie at 519-539 (ASVVDFFTVWLPAPTLSFISY) and 582-602 (VIIGGLKLAGVGVVSSFAAVG). Positions 714–726 (ASQSTVEYSTTEE) are enriched in polar residues. Positions 714 to 735 (ASQSTVEYSTTEEASMDDLKNQ) are disordered.

Belongs to the RETICULATA family.

The protein localises to the plastid. It localises to the chloroplast membrane. Its function is as follows. May play a role in leaf development. The polypeptide is Protein RETICULATA-RELATED 5, chloroplastic (Arabidopsis thaliana (Mouse-ear cress)).